The sequence spans 564 residues: Proline--tRNA ligase (564 aa).

It belongs to the class-II aminoacyl-tRNA synthetase family. ProS type 1 subfamily. Homodimer.

The protein localises to the cytoplasm. The catalysed reaction is tRNA(Pro) + L-proline + ATP = L-prolyl-tRNA(Pro) + AMP + diphosphate. Catalyzes the attachment of proline to tRNA(Pro) in a two-step reaction: proline is first activated by ATP to form Pro-AMP and then transferred to the acceptor end of tRNA(Pro). As ProRS can inadvertently accommodate and process non-cognate amino acids such as alanine and cysteine, to avoid such errors it has two additional distinct editing activities against alanine. One activity is designated as 'pretransfer' editing and involves the tRNA(Pro)-independent hydrolysis of activated Ala-AMP. The other activity is designated 'posttransfer' editing and involves deacylation of mischarged Ala-tRNA(Pro). The misacylated Cys-tRNA(Pro) is not edited by ProRS. In Xanthomonas axonopodis pv. citri (strain 306), this protein is Proline--tRNA ligase.